The chain runs to 80 residues: UPF0512 protein J (80 aa).

It belongs to the UPF0512 family.

This is UPF0512 protein J from Dictyostelium discoideum (Social amoeba).